The primary structure comprises 531 residues: MNHCLVVSHKKLQTFRTFAASKFSSFTKSAQKSIKYSFQFIYQNNPLFVHVAYFALISFAGYGSLKVLKPRDKSNTLKDLDVLFTSVSASTVSSMATVEMEDFSSAQLWVLTILMLIGGEVFTSMLGIHFMRAEFGTKESVSTRDHSPCIDIESITSTKFGPSTQGTKVTVSFSELRMENGGHVEPKTIKFLGFVVMGYLLITNLGGSLLIYLYLNLVPSAHKILKRKGIGIIVFSVFTAISSVGNCGFTPVNENMIIFQKNSILLLLILPQILAGNTLFAPCLRLMVWSLEKITGKKDCRYILEYPKAIGYKHLMSTRESVYLTLTVVSLIILQTVLFLSLEWSSVALDGMSNYQKIVSALFQSVNARHAGESVTDLSNLSSAILVLYTIMMYLPGYTSFLPRHDGEDSKTEKINKRKGLLENWIFSHMSYLAIFVMLICITERDSMATDPLNFNVFSILFEVVSAYGNVGFSVGYSCKRLLNHDARCKDASYGFAGKWSDNGKAILIIVMLFGRLKTFNMKGGRAWKLR.

Over 1 to 46 (MNHCLVVSHKKLQTFRTFAASKFSSFTKSAQKSIKYSFQFIYQNNP) the chain is Cytoplasmic. A run of 2 helical transmembrane segments spans residues 47-67 (LFVH…SLKV) and 108-128 (LWVL…MLGI). The Cytoplasmic segment spans residues 129-190 (HFMRAEFGTK…GGHVEPKTIK (62 aa)). A run of 2 helical transmembrane segments spans residues 191–211 (FLGF…SLLI) and 264–284 (ILLL…APCL). The Cytoplasmic segment spans residues 285-321 (RLMVWSLEKITGKKDCRYILEYPKAIGYKHLMSTRES). Transmembrane regions (helical) follow at residues 322–342 (VYLT…FLSL) and 383–403 (SAIL…SFLP). Residues 404 to 421 (RHDGEDSKTEKINKRKGL) are Cytoplasmic-facing. The next 2 helical transmembrane spans lie at 422–442 (LENW…LICI) and 494–514 (YGFA…VMLF). Residues 515 to 530 (GRLKTFNMKGGRAWKL) are Cytoplasmic-facing.

This sequence belongs to the TrkH potassium transport family. HKT (TC 2.A.38.3) subfamily. In terms of assembly, interacts with CNIH1. In terms of tissue distribution, weakly expressed. In roots, expressed in epidermis, exodermis, cortex, and sieve elements and companion cells of phloem. In mature leaves, expressed in large highly vacuolated cells of the adaxial epidermis, phloem and xylem.

It localises to the endoplasmic reticulum membrane. Its subcellular location is the golgi apparatus membrane. The catalysed reaction is Na(+)(in) = Na(+)(out). In terms of biological role, functions as a highly-selective sodium transporter. Does not seem to function as sodium-potassium cotransporter. May be involved in turgor changes for rolling and unrolling of leaves in response to environmental variations. This is Cation transporter HKT1;3 from Oryza sativa subsp. japonica (Rice).